Reading from the N-terminus, the 501-residue chain is 2-phosphoxylose phosphatase 1 (501 aa).

The Cytoplasmic segment spans residues 1–6; sequence MLLRNR. The helical; Signal-anchor for type II membrane protein transmembrane segment at 7 to 27 threads the bilayer; that stretch reads FLLLLALAGLLAFLSLSLQFF. Over 28-501 the chain is Lumenal; it reads SRWLPVSLQL…YYDACHQRLF (474 aa). The Nucleophile role is filled by H120. Residues N328 and N377 are each glycosylated (N-linked (GlcNAc...) asparagine). D402 (proton donor) is an active-site residue. N488 carries an N-linked (GlcNAc...) asparagine glycan.

It belongs to the histidine acid phosphatase family.

Its subcellular location is the golgi apparatus membrane. The enzyme catalyses 3-O-[beta-D-GlcA-(1-&gt;3)-beta-D-Gal-(1-&gt;3)-beta-D-Gal-(1-&gt;4)-beta-D-2-O-P-Xyl]-L-seryl-[protein] + H2O = 3-O-(beta-D-GlcA-(1-&gt;3)-beta-D-Gal-(1-&gt;3)-beta-D-Gal-(1-&gt;4)-beta-D-Xyl)-L-seryl-[protein] + phosphate. Responsible for the 2-O-dephosphorylation of xylose in the glycosaminoglycan-protein linkage region of proteoglycans thereby regulating the amount of mature glycosaminoglycan (GAG) chains. Sulfated glycosaminoglycans (GAGs), including heparan sulfate and chondroitin sulfate, are synthesized on the so-called common GAG-protein linkage region (GlcUAbeta1-3Galbeta1-3Galbeta1-4Xylbeta1-O-Ser) of core proteins, which is formed by the stepwise addition of monosaccharide residues by the respective specific glycosyltransferases. Xylose 2-O-dephosphorylation during completion of linkage region formation is a prerequisite for the initiation and efficient elongation of the repeating disaccharide region of GAG chains. The protein is 2-phosphoxylose phosphatase 1 of Xenopus tropicalis (Western clawed frog).